The primary structure comprises 672 residues: Glycerophosphocholine phosphodiesterase GPCPD1 (672 aa).

Residues Met1 to Ile115 form the CBM20 domain. Substrate contacts are provided by residues Lys70 and His88–Lys89. Residues Ser175 and Ser424 each carry the phosphoserine modification. The 301-residue stretch at Pro318–Gln618 folds into the GP-PDE domain. Tyr608 is subject to Phosphotyrosine.

It belongs to the glycerophosphoryl diester phosphodiesterase family. In terms of tissue distribution, widely expressed, with highest expression in spinal chord.

It localises to the cytoplasm. It is found in the cytosol. The catalysed reaction is sn-glycerol 3-phosphocholine + H2O = sn-glycerol 3-phosphate + choline + H(+). In terms of biological role, may be involved in the negative regulation of skeletal muscle differentiation, independently of its glycerophosphocholine phosphodiesterase activity. The chain is Glycerophosphocholine phosphodiesterase GPCPD1 (GPCPD1) from Homo sapiens (Human).